The following is a 214-amino-acid chain: MILILLGPPGAGKGTQAKLLSSELGIPHISTGDMFRDHKARGTEIGKQVQAIMDAGGLVTDDITNAMVKERLSRPDVAPGFILDGYPRTVVQAEYLDGLLRSLGRSIDRALSYEVPEELVVERISGRRSCPRCGAVYHVSQNPPHRAGFCDRDDAALVQREDDKPENVRKRMQEYGTKTEPLKRYYRDRGELSDVEGVGTPEGILAVTKKVLGR.

Position 10–15 (10–15) interacts with ATP; the sequence is GAGKGT. The tract at residues 30 to 59 is NMP; it reads STGDMFRDHKARGTEIGKQVQAIMDAGGLV. AMP is bound by residues Thr31, Arg36, 57-59, 85-88, and Gln92; these read GLV and GYPR. The tract at residues 126–163 is LID; that stretch reads GRRSCPRCGAVYHVSQNPPHRAGFCDRDDAALVQREDD. Arg127 lines the ATP pocket. Zn(2+)-binding residues include Cys130 and Cys133. Position 136–137 (136–137) interacts with ATP; sequence VY. Positions 150 and 153 each coordinate Zn(2+). Residues Arg160 and Arg171 each contribute to the AMP site. ATP is bound at residue Gly199.

It belongs to the adenylate kinase family. Monomer.

It is found in the cytoplasm. The enzyme catalyses AMP + ATP = 2 ADP. The protein operates within purine metabolism; AMP biosynthesis via salvage pathway; AMP from ADP: step 1/1. In terms of biological role, catalyzes the reversible transfer of the terminal phosphate group between ATP and AMP. Plays an important role in cellular energy homeostasis and in adenine nucleotide metabolism. In Anaeromyxobacter dehalogenans (strain 2CP-1 / ATCC BAA-258), this protein is Adenylate kinase.